The primary structure comprises 1005 residues: Helicase-like transcription factor (1005 aa).

The residue at position 27 (Arg27) is an Omega-N-methylarginine. The DNA-binding element occupies 38–287 (EFQDIIPPDD…FSEKDQPENV (250 aa)). Lys112 is covalently cross-linked (Glycyl lysine isopeptide (Lys-Gly) (interchain with G-Cter in SUMO2)). The residue at position 195 (Tyr195) is a Phosphotyrosine; by JAK2. Lys211 participates in a covalent cross-link: Glycyl lysine isopeptide (Lys-Gly) (interchain with G-Cter in SUMO2). An ATP-binding site is contributed by 294 to 301 (DDMGLGKT). Residues 325 to 361 (KNQVKKECNSSESDKPGRKDTIKKTDGLSKEGSRYSE) are compositionally biased toward basic and acidic residues. The interval 325 to 385 (KNQVKKECNS…SELSSSQPKR (61 aa)) is disordered. The segment covering 373-382 (YSMSELSSSQ) has biased composition (polar residues). Residues Ser395, Ser396, and Ser398 each carry the phosphoserine modification. Positions 427–603 (GPSKIKEDTA…WSLLSFLKLK (177 aa)) constitute a Helicase ATP-binding domain. Residues 554–557 (DEGH) carry the DEGH box motif. Thr733 carries the post-translational modification Phosphothreonine. The segment at 757–798 (CAICLDSLTVPVITHCAHVFCKPCICQCIQNEQPHAKCPLCR) adopts an RING-type zinc-finger fold. Required for interaction with the RFBP isoform of ATP11B regions lie at residues 767 to 772 (PVITHC) and 791 to 796 (HAKCPL). The Helicase C-terminal domain maps to 834-999 (ALMHALIDLR…EMKQAKINEI (166 aa)). Residues 922-1005 (SRVFLMDPAW…INEIRTLIDL (84 aa)) form an interaction with SP1 and SP3 region.

The protein belongs to the SNF2/RAD54 helicase family. RAD16 subfamily. In terms of assembly, interacts with SP1 and SP3 independently of DNA; the interaction with these transcriptional factors may be required for basal transcription of target genes. Interacts (via the RING-finger) with isoform RFBP of ATP11B. Progesterone-dependent isoform 1 interacts with EGR1; the interaction requires prior binding to DNA and represses c-Rel via a DNA looping mechanism. Interacts with GATA4. Interacts with PCNA; the interaction promotes polyubiquitination of PCNA through association with the UBE2B-RAD18 and UBE2V2-UBE2N ubiquitin ligase complexes. Interacts with RAD18, SHPRH, UBE2V2 and UBE2N. Post-translationally, phosphorylated on serine, threonine, and tyrosine residues. Tyr-195 phosphorylation is catalyzed by JAK2 in response to prolactin treatment. It is required for DNA binding. In terms of tissue distribution, isoform 1 is expressed preferentially in bladder, cervix, diaphragm, duodenum, epididymis, heart, kidney, liver, lung, ovary (granulosa cells), prostate, spleen, testis (predominantly in the Sertoli cells of the seminiferous tubules) and vagina. Isoform 2 is expressed preferentially in lactating mammary gland and uterine endometrium.

Its subcellular location is the cytoplasm. The protein localises to the nucleus. It is found in the nucleolus. The protein resides in the nucleoplasm. The catalysed reaction is S-ubiquitinyl-[E2 ubiquitin-conjugating enzyme]-L-cysteine + [acceptor protein]-L-lysine = [E2 ubiquitin-conjugating enzyme]-L-cysteine + N(6)-ubiquitinyl-[acceptor protein]-L-lysine.. It participates in protein modification; protein ubiquitination. Its function is as follows. Has both helicase and E3 ubiquitin ligase activities. Possesses intrinsic ATP-dependent nucleosome-remodeling activity. This activity may be required for transcriptional activation or repression of specific target promoters. These may include the SERPINE1, to which this protein can bind directly. Mediates repression by c-Rel through a DNA-looping mechanism. Plays a role in error-free postreplication repair (PRR) of damaged DNA and maintains genomic stability through acting as a ubiquitin ligase for 'Lys-63'-linked polyubiquitination of chromatin-bound PCNA. Transcriptional regulator that mediates the ability of prolactin to augment progesterone-dependent transcription of the SCGB1A1/uteroglobin gene through a bipartite progesterone receptor half-site/overlapping Y-box combination (-38/-26) where progesterone activation is attenuated by nuclear factor Y binding. Regulation also involves two GC-rich sequences in the proximal promoter (positions -162/+90) and a RUSH/SMARCA3 site (positions -616/-611) in the 5'-untranslated region. The chain is Helicase-like transcription factor (HLTF) from Oryctolagus cuniculus (Rabbit).